Consider the following 493-residue polypeptide: Dipeptide and tripeptide permease B (493 aa).

Topologically, residues 1–27 are cytoplasmic; the sequence is MERSTPTGLLQQPKPFFMIFFVELWER. The chain crosses the membrane as a helical span at residues 28–48; it reads FGYYGVQGILAVFFVQQLGFS. At 49–52 the chain is on the periplasmic side; that stretch reads QEQA. A helical transmembrane segment spans residues 53-73; the sequence is FVTFGAFAALVYGLISIGGYV. Residues 74–82 are Cytoplasmic-facing; it reads GDHLLGTKR. Residues 83–103 traverse the membrane as a helical segment; it reads TMVLGAVVLAAGYFATGLSLY. At 104–106 the chain is on the periplasmic side; it reads QPN. Residues 107-127 form a helical membrane-spanning segment; that stretch reads LIFFALGTIAVGNGLFKANPA. Over 128–146 the chain is Cytoplasmic; the sequence is SLLSKCYPPKDPRLDGAFT. Residues 147-167 traverse the membrane as a helical segment; sequence LFYMSINIGSLLSLSLAPVIA. The Periplasmic portion of the chain corresponds to 168–169; sequence ER. Residues 170-190 form a helical membrane-spanning segment; it reads FGYTVTYYLCGIGLIFALLVY. Topologically, residues 191-212 are cytoplasmic; the sequence is FCCRHMVRHIGSEPDTKPLNWR. 2 consecutive transmembrane segments (helical) span residues 213–233 and 234–254; these read NLLL…WLMN and HVFI…FIFF. Residues 255-267 are Cytoplasmic-facing; sequence REASKQDRLGRNK. A helical transmembrane segment spans residues 268 to 288; it reads MFVAFILMIEAIVFYVLYAQM. The Periplasmic portion of the chain corresponds to 289–311; sequence PTSLNFFAINNVHHEILGFSINP. Residues 312–332 form a helical membrane-spanning segment; that stretch reads VSFQALNPFWVVVASPILASI. The Cytoplasmic portion of the chain corresponds to 333 to 350; sequence YTRLGSQNRDLSMPAKFT. A helical transmembrane segment spans residues 351–371; the sequence is LGMFLCSLGFLTAAAAGMWFA. Over 372-379 the chain is Periplasmic; the sequence is DAQGLTSP. A helical transmembrane segment spans residues 380–400; it reads WFIVLVYLFQSLGELMISALG. Topologically, residues 401 to 424 are cytoplasmic; that stretch reads LAMVAALVPQYLMGFILGMWFLTQ. Residues 425-445 form a helical membrane-spanning segment; the sequence is AASFLIGGYVATFTATPEGMT. Over 446 to 456 the chain is Periplasmic; the sequence is DPLETLPIYTD. A helical membrane pass occupies residues 457-477; sequence VFGKIGMVTLVIALVMALLIP. Topologically, residues 478–493 are cytoplasmic; sequence WLNRMINSSAAEDAVA.

This sequence belongs to the major facilitator superfamily. Proton-dependent oligopeptide transporter (POT/PTR) (TC 2.A.17) family. DtpB subfamily.

Its subcellular location is the cell inner membrane. Proton-dependent permease that transports di- and tripeptides. The sequence is that of Dipeptide and tripeptide permease B from Yersinia enterocolitica serotype O:8 / biotype 1B (strain NCTC 13174 / 8081).